A 106-amino-acid polypeptide reads, in one-letter code: Large ribosomal subunit protein bL21 (106 aa).

The protein belongs to the bacterial ribosomal protein bL21 family. Part of the 50S ribosomal subunit. Contacts protein L20.

This protein binds to 23S rRNA in the presence of protein L20. This chain is Large ribosomal subunit protein bL21, found in Xanthomonas campestris pv. campestris (strain ATCC 33913 / DSM 3586 / NCPPB 528 / LMG 568 / P 25).